A 371-amino-acid chain; its full sequence is Probable G protein-coupled receptor 85 (371 aa).

The Extracellular segment spans residues 1–26; it reads MANYSHAGDHNILQNVSPLATFLKLT. N-linked (GlcNAc...) asparagine glycosylation occurs at Asn3. A helical transmembrane segment spans residues 27–47; that stretch reads SLGFIIGVGVVGNLLISILLV. Residues 48 to 58 lie on the Cytoplasmic side of the membrane; it reads KDKSLHRAPYY. A helical membrane pass occupies residues 59–79; it reads FLLDLCASDILRSAICFPFVF. Topologically, residues 80–96 are extracellular; it reads TSVKNGSAWTYGTLTCK. N-linked (GlcNAc...) asparagine glycosylation occurs at Asn84. Cys95 and Cys173 are joined by a disulfide. The chain crosses the membrane as a helical span at residues 97-117; sequence VIAFLGVLSCFHTAFMLFCVS. Over 118–138 the chain is Cytoplasmic; the sequence is VTRYLAIAHHRFYTKRLTFWT. Residues 139–159 form a helical membrane-spanning segment; it reads CLAVICMVWTLSVAMAFPPVL. Topologically, residues 160–189 are extracellular; that stretch reads DVGTYSFIREEDQCTFQHRSFRANDSLGFM. A glycan (N-linked (GlcNAc...) asparagine) is linked at Asn183. The helical transmembrane segment at 190–210 threads the bilayer; it reads LLLALILLATQLVYLKLIFFV. Over 211-287 the chain is Cytoplasmic; the sequence is HDRRKMKPVQ…FKTEKRISRM (77 aa). The helical transmembrane segment at 288–308 threads the bilayer; it reads FYIITFFFLSLWGPYLVACYW. Over 309 to 321 the chain is Extracellular; it reads RVFARGPVIPGGY. A helical transmembrane segment spans residues 322 to 342; sequence LTAAVWMSFAQAGVNPFICIF. Residues 343–371 lie on the Cytoplasmic side of the membrane; it reads SNRELRRCFSTTLLYCRKSRLPREPYCVI.

It belongs to the G-protein coupled receptor 1 family.

The protein localises to the cell membrane. Functionally, orphan receptor. This Danio rerio (Zebrafish) protein is Probable G protein-coupled receptor 85 (gpr85).